We begin with the raw amino-acid sequence, 95 residues long: Secretoglobin family 1C member 1 (95 aa).

The first 23 residues, 1–23 (MKGSSALLLVALSLLCVCGLTRA), serve as a signal peptide directing secretion.

This sequence belongs to the secretoglobin family.

It is found in the secreted. This is Secretoglobin family 1C member 1 (Scgb1c1) from Mus musculus (Mouse).